The sequence spans 455 residues: METSLETLWSQVLERLQLQLSRPTFETWIKTANAEQLDENRLVIRTPNPFARNWLQKYYVKTIRDVVHEILGHPVEIQIEIAQGDSNATISAPEVASPPPTASPVENTNTSQRQQASLNPKYVFSRYVVGPNNRMAHAACLAVAESPGREFNPLFLCGGVGLGKTHLMQAIGHYRLEISPNSRIFYISTEQFTNDLIAAIRKDGMQKFREHYRAVDVMLVDDIQFIEGKEYTQEEFFHTFNTLHEAGKQVVLASDRPPSQIPRLQERLCSRFSMGLIADIQPPDLETRMAILQKKAEYENIRLPREVIEYIASSYTSNIRELEGALIRAVAYISISGLPMNVENIAPVLNPPTAKISASPESIINAVADTYGISIDDLKGNSRRREISMARQIGMYLMRQHTDLSLPKIGEEFGGKDHTTVMYSCDKVSDLQKKNPELAQSLRQLGDRIKLANQP.

The segment at 1–73 (METSLETLWS…RDVVHEILGH (73 aa)) is domain I, interacts with DnaA modulators. The segment at 73–116 (HPVEIQIEIAQGDSNATISAPEVASPPPTASPVENTNTSQRQQA) is domain II. The interval 92 to 116 (APEVASPPPTASPVENTNTSQRQQA) is disordered. Residues 104-116 (PVENTNTSQRQQA) are compositionally biased toward polar residues. The domain III, AAA+ region stretch occupies residues 117-333 (SLNPKYVFSR…GALIRAVAYI (217 aa)). Positions 161, 163, 164, and 165 each coordinate ATP. The segment at 334 to 455 (SISGLPMNVE…GDRIKLANQP (122 aa)) is domain IV, binds dsDNA.

This sequence belongs to the DnaA family. Oligomerizes as a right-handed, spiral filament on DNA at oriC.

It localises to the cytoplasm. Functionally, plays an essential role in the initiation and regulation of chromosomal replication. ATP-DnaA binds to the origin of replication (oriC) to initiate formation of the DNA replication initiation complex once per cell cycle. Binds the DnaA box (a 9 base pair repeat at the origin) and separates the double-stranded (ds)DNA. Forms a right-handed helical filament on oriC DNA; dsDNA binds to the exterior of the filament while single-stranded (ss)DNA is stabiized in the filament's interior. The ATP-DnaA-oriC complex binds and stabilizes one strand of the AT-rich DNA unwinding element (DUE), permitting loading of DNA polymerase. After initiation quickly degrades to an ADP-DnaA complex that is not apt for DNA replication. Binds acidic phospholipids. The chain is Chromosomal replication initiator protein DnaA from Acaryochloris marina (strain MBIC 11017).